Reading from the N-terminus, the 153-residue chain is 6,7-dimethyl-8-ribityllumazine synthase (153 aa).

5-amino-6-(D-ribitylamino)uracil is bound by residues Phe-22, Ala-56 to Glu-58, and Ala-80 to Ile-82. Residue Ala-85 to Thr-86 participates in (2S)-2-hydroxy-3-oxobutyl phosphate binding. His-88 functions as the Proton donor in the catalytic mechanism. Position 113 (Phe-113) interacts with 5-amino-6-(D-ribitylamino)uracil. Arg-127 contributes to the (2S)-2-hydroxy-3-oxobutyl phosphate binding site.

This sequence belongs to the DMRL synthase family.

It catalyses the reaction (2S)-2-hydroxy-3-oxobutyl phosphate + 5-amino-6-(D-ribitylamino)uracil = 6,7-dimethyl-8-(1-D-ribityl)lumazine + phosphate + 2 H2O + H(+). The protein operates within cofactor biosynthesis; riboflavin biosynthesis; riboflavin from 2-hydroxy-3-oxobutyl phosphate and 5-amino-6-(D-ribitylamino)uracil: step 1/2. Its function is as follows. Catalyzes the formation of 6,7-dimethyl-8-ribityllumazine by condensation of 5-amino-6-(D-ribitylamino)uracil with 3,4-dihydroxy-2-butanone 4-phosphate. This is the penultimate step in the biosynthesis of riboflavin. The chain is 6,7-dimethyl-8-ribityllumazine synthase from Alkaliphilus metalliredigens (strain QYMF).